The sequence spans 241 residues: Large ribosomal subunit protein uL30 (241 aa).

Positions 1 to 25 (MASTLKPETLVKKSKAQQKTAEERA) are disordered.

Belongs to the universal ribosomal protein uL30 family.

This is Large ribosomal subunit protein uL30 (RPL7) from Debaryomyces hansenii (strain ATCC 36239 / CBS 767 / BCRC 21394 / JCM 1990 / NBRC 0083 / IGC 2968) (Yeast).